The sequence spans 174 residues: Shikimate kinase 2 (174 aa).

Residue 12 to 17 (GCGKTT) participates in ATP binding. Mg(2+)-binding residues include T16 and D32. Positions 34, 58, and 79 each coordinate substrate. The interval 112 to 126 (QAAPEEDLRPTLTGK) is LID domain. ATP is bound at residue R120. R139 contacts substrate.

It belongs to the shikimate kinase family. AroL subfamily. Monomer. The cofactor is Mg(2+).

The protein localises to the cytoplasm. The catalysed reaction is shikimate + ATP = 3-phosphoshikimate + ADP + H(+). Its pathway is metabolic intermediate biosynthesis; chorismate biosynthesis; chorismate from D-erythrose 4-phosphate and phosphoenolpyruvate: step 5/7. Catalyzes the specific phosphorylation of the 3-hydroxyl group of shikimic acid using ATP as a cosubstrate. The chain is Shikimate kinase 2 from Shigella boydii serotype 4 (strain Sb227).